Reading from the N-terminus, the 137-residue chain is Small ribosomal subunit protein uS12 (137 aa).

The disordered stretch occupies residues 1 to 57 (MPTINQLVRKPRKSKTKQSDSPVLNRGFNSKKKQFTNLNSPQKRGVCTRVGTMTPRK). D102 carries the post-translational modification 3-methylthioaspartic acid. The segment at 118-137 (SGVDGRRQGRSLYGTKKPKN) is disordered.

The protein belongs to the universal ribosomal protein uS12 family. In terms of assembly, part of the 30S ribosomal subunit. Contacts proteins S8 and S17. May interact with IF1 in the 30S initiation complex.

With S4 and S5 plays an important role in translational accuracy. In terms of biological role, interacts with and stabilizes bases of the 16S rRNA that are involved in tRNA selection in the A site and with the mRNA backbone. Located at the interface of the 30S and 50S subunits, it traverses the body of the 30S subunit contacting proteins on the other side and probably holding the rRNA structure together. The combined cluster of proteins S8, S12 and S17 appears to hold together the shoulder and platform of the 30S subunit. The chain is Small ribosomal subunit protein uS12 from Staphylococcus epidermidis (strain ATCC 12228 / FDA PCI 1200).